Here is a 141-residue protein sequence, read N- to C-terminus: Transcription antitermination protein NusB (141 aa).

Belongs to the NusB family.

Involved in transcription antitermination. Required for transcription of ribosomal RNA (rRNA) genes. Binds specifically to the boxA antiterminator sequence of the ribosomal RNA (rrn) operons. The sequence is that of Transcription antitermination protein NusB from Neisseria meningitidis serogroup B (strain ATCC BAA-335 / MC58).